Reading from the N-terminus, the 364-residue chain is Histidinol-phosphate aminotransferase (364 aa).

Lys-224 bears the N6-(pyridoxal phosphate)lysine mark.

It belongs to the class-II pyridoxal-phosphate-dependent aminotransferase family. Histidinol-phosphate aminotransferase subfamily. As to quaternary structure, homodimer. The cofactor is pyridoxal 5'-phosphate.

The enzyme catalyses L-histidinol phosphate + 2-oxoglutarate = 3-(imidazol-4-yl)-2-oxopropyl phosphate + L-glutamate. It participates in amino-acid biosynthesis; L-histidine biosynthesis; L-histidine from 5-phospho-alpha-D-ribose 1-diphosphate: step 7/9. This Anaeromyxobacter sp. (strain Fw109-5) protein is Histidinol-phosphate aminotransferase.